Reading from the N-terminus, the 510-residue chain is ATP synthase subunit alpha (510 aa).

ATP is bound at residue 169-176 (GDRQTGKT).

This sequence belongs to the ATPase alpha/beta chains family. In terms of assembly, F-type ATPases have 2 components, CF(1) - the catalytic core - and CF(0) - the membrane proton channel. CF(1) has five subunits: alpha(3), beta(3), gamma(1), delta(1), epsilon(1). CF(0) has three main subunits: a(1), b(2) and c(9-12). The alpha and beta chains form an alternating ring which encloses part of the gamma chain. CF(1) is attached to CF(0) by a central stalk formed by the gamma and epsilon chains, while a peripheral stalk is formed by the delta and b chains.

It is found in the cell inner membrane. It carries out the reaction ATP + H2O + 4 H(+)(in) = ADP + phosphate + 5 H(+)(out). Produces ATP from ADP in the presence of a proton gradient across the membrane. The alpha chain is a regulatory subunit. The chain is ATP synthase subunit alpha from Rickettsia rickettsii (strain Iowa).